A 296-amino-acid polypeptide reads, in one-letter code: MKLKREYDELIKADAVKEIAKELGSRPLEVALPEKYIARHEEKFNMACEHILEKDPSLFPILKNNEFTLYLKETQVPNTLEDYFIRLASTILSQQISGQAAESIKARVVSLYGGAFPDYKILFEDFKDPAKCAEIAKCGLSKRKMIYLESLAVYFTEKYKDIEKLFGQKDNDEEVIESLVTNVKGIGPWSAKMFLISGLKRMDVFAPEDLGIARGFSKYLSDKPELEKELMRERKVVKKSKIKHKKYNWKIYDDDIMEKCSETFSPYRSVFMFILWRLASTNTDAMMKAEENFVKS.

The residue at position 110 (Ser110) is a Phosphoserine. Asp209 serves as the catalytic Proton acceptor.

This sequence belongs to the alkylbase DNA glycosidase AlkA family.

The protein localises to the nucleus. It catalyses the reaction Hydrolysis of alkylated DNA, releasing 3-methyladenine, 3-methylguanine, 7-methylguanine and 7-methyladenine.. Functionally, hydrolysis of the deoxyribose N-glycosidic bond to excise 3-methyladenine or 7-methyladenine from the damaged DNA polymer formed by alkylation lesions. This chain is DNA-3-methyladenine glycosylase (MAG1), found in Saccharomyces cerevisiae (strain ATCC 204508 / S288c) (Baker's yeast).